The primary structure comprises 262 residues: Probable ketoamine kinase TTHA1179 (262 aa).

Residue 79–81 participates in ATP binding; that stretch reads AYL. Asp172 acts as the Proton acceptor in catalysis.

This sequence belongs to the fructosamine kinase family.

It catalyses the reaction N(6)-(D-ribulosyl)-L-lysine + ATP = N(6)-(3-O-phospho-D-ribulosyl)-L-lysine + ADP + H(+). The catalysed reaction is N(6)-(D-erythrulosyl)-L-lysine + ATP = N(6)-(3-O-phospho-D-erythrulosyl)-L-lysine + ADP + H(+). It carries out the reaction N(6)-D-ribulosyl-L-lysyl-[protein] + ATP = N(6)-(3-O-phospho-D-ribulosyl)-L-lysyl-[protein] + ADP + H(+). The enzyme catalyses N(6)-(D-erythrulosyl)-L-lysyl-[protein] + ATP = N(6)-(3-O-phospho-D-erythrulosyl)-L-lysyl-[protein] + ADP + H(+). In terms of biological role, ketoamine kinase that phosphorylates ketoamines, such as erythruloselysine and ribuloselysine, on the third carbon of the sugar moiety to generate ketoamine 3-phosphate. Has higher activity on free lysine (erythruloselysine and ribuloselysine), than on ribuloselysine and erythruloselysine residues on glycated proteins. The polypeptide is Probable ketoamine kinase TTHA1179 (Thermus thermophilus (strain ATCC 27634 / DSM 579 / HB8)).